The following is a 102-amino-acid chain: Large ribosomal subunit protein bL21 (102 aa).

This sequence belongs to the bacterial ribosomal protein bL21 family. In terms of assembly, part of the 50S ribosomal subunit. Contacts protein L20.

This protein binds to 23S rRNA in the presence of protein L20. This is Large ribosomal subunit protein bL21 from Latilactobacillus sakei subsp. sakei (strain 23K) (Lactobacillus sakei subsp. sakei).